Consider the following 223-residue polypeptide: Germin-like protein 1-3 (223 aa).

The first 22 residues, 1 to 22, serve as a signal peptide directing secretion; the sequence is MAKLILATFAVVFMALAATSLA. C32 and C50 are joined by a disulfide. N55 carries an N-linked (GlcNAc...) asparagine glycan. One can recognise a Cupin type-1 domain in the interval 64–212; sequence DGLMKAGNTG…AFQVDGGMVE (149 aa). Residues H112, H114, E119, and H158 each contribute to the Mn(2+) site.

This sequence belongs to the germin family. As to quaternary structure, oligomer (believed to be a pentamer but probably hexamer).

It is found in the secreted. The protein resides in the extracellular space. Its subcellular location is the apoplast. May play a role in plant defense. Probably has no oxalate oxidase activity even if the active site is conserved. This Oryza sativa subsp. japonica (Rice) protein is Germin-like protein 1-3 (GER8).